Reading from the N-terminus, the 438-residue chain is V-type ATP synthase beta chain (438 aa).

Belongs to the ATPase alpha/beta chains family.

In terms of biological role, produces ATP from ADP in the presence of a proton gradient across the membrane. The V-type beta chain is a regulatory subunit. In Protochlamydia amoebophila (strain UWE25), this protein is V-type ATP synthase beta chain.